Here is a 155-residue protein sequence, read N- to C-terminus: Endoribonuclease YbeY (155 aa).

His-115, His-119, and His-125 together coordinate Zn(2+).

Belongs to the endoribonuclease YbeY family. It depends on Zn(2+) as a cofactor.

Its subcellular location is the cytoplasm. Its function is as follows. Single strand-specific metallo-endoribonuclease involved in late-stage 70S ribosome quality control and in maturation of the 3' terminus of the 16S rRNA. This is Endoribonuclease YbeY from Polynucleobacter asymbioticus (strain DSM 18221 / CIP 109841 / QLW-P1DMWA-1) (Polynucleobacter necessarius subsp. asymbioticus).